The following is a 394-amino-acid chain: p-hydroxybenzoate hydroxylase (394 aa).

Residues serine 13, glutamate 32, 42-47 (RIRAGV), and glutamine 102 contribute to the FAD site. Substrate contacts are provided by residues tyrosine 201, 212-214 (SQR), and tyrosine 222. An FAD-binding site is contributed by aspartate 286. Proline 293 serves as a coordination point for substrate. An FAD-binding site is contributed by 299 to 300 (LN).

This sequence belongs to the aromatic-ring hydroxylase family. In terms of assembly, homodimer. FAD is required as a cofactor.

It carries out the reaction 4-hydroxybenzoate + NADPH + O2 + H(+) = 3,4-dihydroxybenzoate + NADP(+) + H2O. It participates in aromatic compound metabolism; benzoate degradation via hydroxylation; 3,4-dihydroxybenzoate from benzoate: step 2/2. Functionally, catalyzes the incorporation of an atom of dioxygen into p-hydroxybenzoate (p-OHB) to form 3,4-dihydroxybenzoate (3,4DOHB). The reaction occurs in two parts: reduction of the flavin adenine dinucleotide (FAD) in the enzyme by reduced nicotinamide adenine dinucleotide phosphate (NADPH) in response to binding p-hydroxybenzoate to the enzyme and oxidation of reduced FAD with oxygen to form a hydroperoxide, which then oxygenates p-hydroxybenzoate. The chain is p-hydroxybenzoate hydroxylase (pobA) from Pseudomonas fluorescens.